Consider the following 99-residue polypeptide: Large ribosomal subunit protein uL23 (99 aa).

It belongs to the universal ribosomal protein uL23 family. In terms of assembly, part of the 50S ribosomal subunit. Contacts protein L29, and trigger factor when it is bound to the ribosome.

Its function is as follows. One of the early assembly proteins it binds 23S rRNA. One of the proteins that surrounds the polypeptide exit tunnel on the outside of the ribosome. Forms the main docking site for trigger factor binding to the ribosome. This chain is Large ribosomal subunit protein uL23, found in Shewanella woodyi (strain ATCC 51908 / MS32).